The sequence spans 295 residues: Bifunctional protein FolD (295 aa).

NADP(+) is bound by residues 165 to 167, S192, and I233; that span reads GRG.

Belongs to the tetrahydrofolate dehydrogenase/cyclohydrolase family. In terms of assembly, homodimer.

The enzyme catalyses (6R)-5,10-methylene-5,6,7,8-tetrahydrofolate + NADP(+) = (6R)-5,10-methenyltetrahydrofolate + NADPH. The catalysed reaction is (6R)-5,10-methenyltetrahydrofolate + H2O = (6R)-10-formyltetrahydrofolate + H(+). It functions in the pathway one-carbon metabolism; tetrahydrofolate interconversion. Functionally, catalyzes the oxidation of 5,10-methylenetetrahydrofolate to 5,10-methenyltetrahydrofolate and then the hydrolysis of 5,10-methenyltetrahydrofolate to 10-formyltetrahydrofolate. The sequence is that of Bifunctional protein FolD from Tropheryma whipplei (strain TW08/27) (Whipple's bacillus).